The chain runs to 259 residues: UPF0246 protein MADE_1015435 (259 aa).

This sequence belongs to the UPF0246 family.

The protein is UPF0246 protein MADE_1015435 of Alteromonas mediterranea (strain DSM 17117 / CIP 110805 / LMG 28347 / Deep ecotype).